The following is a 378-amino-acid chain: Branched-chain-amino-acid aminotransferase (378 aa).

An N6-(pyridoxal phosphate)lysine modification is found at lysine 213.

The protein belongs to the class-IV pyridoxal-phosphate-dependent aminotransferase family. As to quaternary structure, homodimer. Pyridoxal 5'-phosphate is required as a cofactor.

The catalysed reaction is L-leucine + 2-oxoglutarate = 4-methyl-2-oxopentanoate + L-glutamate. The enzyme catalyses L-isoleucine + 2-oxoglutarate = (S)-3-methyl-2-oxopentanoate + L-glutamate. It catalyses the reaction L-valine + 2-oxoglutarate = 3-methyl-2-oxobutanoate + L-glutamate. Catalyzes the first reaction in the catabolism of the essential branched chain amino acids leucine, isoleucine, and valine. This chain is Branched-chain-amino-acid aminotransferase (bcaA), found in Dictyostelium discoideum (Social amoeba).